Reading from the N-terminus, the 628-residue chain is Biosynthetic arginine decarboxylase (628 aa).

K99 bears the N6-(pyridoxal phosphate)lysine mark. 279 to 289 (VDVGGGLGIDY) lines the substrate pocket.

The protein belongs to the Orn/Lys/Arg decarboxylase class-II family. SpeA subfamily. It depends on Mg(2+) as a cofactor. The cofactor is pyridoxal 5'-phosphate.

It catalyses the reaction L-arginine + H(+) = agmatine + CO2. Its function is as follows. Catalyzes the biosynthesis of agmatine from arginine. The polypeptide is Biosynthetic arginine decarboxylase (Xanthomonas axonopodis pv. citri (strain 306)).